The primary structure comprises 190 residues: Dynein axonemal light chain 1 (190 aa).

LRR repeat units follow at residues 49–70 (VCEKLSLSTNCIEKIANLNGLK), 71–92 (NLKILSLGRNNIKNLNGLEAVG), 94–115 (SLEELWISYNSIEKLKGIHVLK), and 116–137 (KLKVLLMSNNQVKDWGEFNKLQ). Residues 150–190 (NPLEEKHSAEGDWQDRVTKSLKALKKLDGTPIIKNDEEEED) enclose the LRRCT domain.

It belongs to the dynein light chain LC1-type family. Interacts with DNAH5, a outer arm dynein heavy chain. Interacts with tubulin located within the A-tubule of the outer doublets in a ATP-independent manner.

The protein resides in the cytoplasm. It localises to the cytoskeleton. It is found in the cilium axoneme. Part of the multisubunit axonemal ATPase complexes that generate the force for cilia motility and govern beat frequency. Component of the outer arm dynein (ODA). May be involved in a mechanosensory feedback mechanism controlling ODA activity based on external conformational cues by tethering the outer arm dynein heavy chain (DNAH5) to the microtubule within the axoneme. The polypeptide is Dynein axonemal light chain 1 (DNAL1) (Ciona intestinalis (Transparent sea squirt)).